We begin with the raw amino-acid sequence, 472 residues long: Serine/threonine-protein phosphatase T (472 aa).

3 TPR repeats span residues 7–40 (ADKLKQLGNAAFSERKWHLAIDMYTKAIELTKTP), 41–73 (TLFCNRALAELRAELPGAALADADAALGIEPTF), and 74–107 (AKAYYHKASAYLSLGKHKQALTNYKKVVDLAPQN). Residues D217, H219, D246, and N278 each contribute to the Mn(2+) site. H279 (proton donor/acceptor) is an active-site residue. Mn(2+)-binding residues include H327 and H403.

The protein belongs to the PPP phosphatase family. PP-5 (PP-T) subfamily. Mg(2+) is required as a cofactor. Requires Mn(2+) as cofactor.

It localises to the cytoplasm. The protein resides in the cytosol. Its subcellular location is the nucleus. The enzyme catalyses O-phospho-L-seryl-[protein] + H2O = L-seryl-[protein] + phosphate. The catalysed reaction is O-phospho-L-threonyl-[protein] + H2O = L-threonyl-[protein] + phosphate. With respect to regulation, activated by arachidonic acid. May function as a protein phosphatase. This chain is Serine/threonine-protein phosphatase T, found in Trypanosoma brucei brucei (strain 927/4 GUTat10.1).